Consider the following 443-residue polypeptide: Postreplication repair E3 ubiquitin-protein ligase rad18 (443 aa).

Residues cysteine 30–arginine 68 form an RING-type zinc finger. The segment at glycine 106–threonine 157 is disordered. Over residues threonine 143–threonine 157 the composition is skewed to polar residues. A UBZ4-type zinc finger spans residues leucine 175–glutamate 202. Zn(2+) is bound by residues cysteine 178, cysteine 181, histidine 193, and cysteine 197. Positions leucine 239–tryptophan 273 constitute an SAP domain. Polar residues-rich tracts occupy residues isoleucine 350 to serine 363 and proline 431 to histidine 443. The segment at isoleucine 350–histidine 443 is disordered.

It belongs to the RAD18 family. As to quaternary structure, interacts with E2 UBC2, forming a complex with ubiquitin ligase activity.

The protein localises to the nucleus. The enzyme catalyses S-ubiquitinyl-[E2 ubiquitin-conjugating enzyme]-L-cysteine + [acceptor protein]-L-lysine = [E2 ubiquitin-conjugating enzyme]-L-cysteine + N(6)-ubiquitinyl-[acceptor protein]-L-lysine.. Its pathway is protein modification; protein ubiquitination. E3 RING-finger protein, member of the UBC2/RAD6 epistasis group. Associates to the E2 ubiquitin conjugating enzyme UBC2/RAD6 to form the UBC2-RAD18 ubiquitin ligase complex involved in postreplicative repair (PRR) of damaged DNA. This chain is Postreplication repair E3 ubiquitin-protein ligase rad18 (uvsH), found in Emericella nidulans (strain FGSC A4 / ATCC 38163 / CBS 112.46 / NRRL 194 / M139) (Aspergillus nidulans).